Consider the following 339-residue polypeptide: MTDRSPFETDMLTLTRYVMEKGRQAKGTGELTQLLNSMLTAIKAISSAVRKAGLAHLYGIAGTVNVTGDEVKKLDVLSNALVINMLQSSYSTCVLVSEENKEAIITAKERRGKYVVCFDPLDGSSNIDCLASIGTIFAIYRKTTEDEPSDKDALQPGRNIVAAGYALYGSATLVALSTGQGVDLFMLDPALGEFVLVEKDVKIKKKGKIFSLNEGYAKYFDAATTEYVQKKKFPEDGSAPYGARYVGSMVADVHRTLVYGGIFLYPANQKSPKGKLRLLYECNPVAYIIEQAGGLATTGTQPVLDVKPESIHQRVPLILGSPDDVQEYLACVQKNQAGR.

The interval 3–10 is important for interaction with ALDOA; the sequence is DRSPFETD. Residues Val18 and 28–32 contribute to the AMP site; that span reads TGELT. Mg(2+) contacts are provided by Asp69 and Glu98. 113–114 is an AMP binding site; that stretch reads KY. Residues Asp119, Leu121, and Asp122 each coordinate Mg(2+). Residue Asp122 participates in substrate binding. Residue Arg141 participates in AMP binding. The Nuclear localization signal signature appears at 204–208; it reads KKKGK. 213–216 provides a ligand contact to substrate; it reads NEGY. Phosphotyrosine occurs at positions 216 and 219. Substrate contacts are provided by residues 245–249, Tyr265, and Lys275; that span reads YVGSM. Glu281 contributes to the Mg(2+) binding site.

It belongs to the FBPase class 1 family. In terms of assembly, homotetramer. Interacts with ALDOA; the interaction blocks inhibition by physiological concentrations of AMP and reduces inhibition by Ca(2+). Interacts with alpha-actinin and F-actin. Mg(2+) is required as a cofactor.

It localises to the cell junction. The protein localises to the cytoplasm. It is found in the nucleus. The protein resides in the myofibril. Its subcellular location is the sarcomere. It localises to the z line. The enzyme catalyses beta-D-fructose 1,6-bisphosphate + H2O = beta-D-fructose 6-phosphate + phosphate. The protein operates within carbohydrate biosynthesis; gluconeogenesis. Subject to complex allosteric regulation. The enzyme can assume an active R-state, or an inactive T-state. Intermediate conformations may exist. AMP acts as an allosteric inhibitor. Fructose 2,6-bisphosphate acts as a competitive inhibitor. Strongly inhibited by Ca(2+). Its function is as follows. Catalyzes the hydrolysis of fructose 1,6-bisphosphate to fructose 6-phosphate in the presence of divalent cations and probably participates in glycogen synthesis from carbohydrate precursors, such as lactate. The sequence is that of Fructose-1,6-bisphosphatase isozyme 2 (FBP2) from Oryctolagus cuniculus (Rabbit).